The sequence spans 154 residues: PTS system fructose-specific EIIA component (154 aa).

The PTS EIIA type-2 domain occupies 8–152 (TITPLELISL…QTVQDVLAEV (145 aa)). Residue His-70 is the Tele-phosphohistidine intermediate of the active site. His-70 carries the post-translational modification Phosphohistidine; by HPr.

The protein localises to the cytoplasm. Functionally, the phosphoenolpyruvate-dependent sugar phosphotransferase system (sugar PTS), a major carbohydrate active transport system, catalyzes the phosphorylation of incoming sugar substrates concomitantly with their translocation across the cell membrane. The enzyme II PtfABC PTS system is involved in fructose transport. This chain is PTS system fructose-specific EIIA component, found in Haloferax volcanii (strain ATCC 29605 / DSM 3757 / JCM 8879 / NBRC 14742 / NCIMB 2012 / VKM B-1768 / DS2) (Halobacterium volcanii).